We begin with the raw amino-acid sequence, 435 residues long: ATP-dependent RNA helicase RhlB (435 aa).

The short motif at 9 to 37 (QKFADFSLQTEIKTALNESGFEYCTPIQA) is the Q motif element. Residues 40-219 (LPILLQKKDI…YDHMNEPEKV (180 aa)) enclose the Helicase ATP-binding domain. Residue 53-60 (AQTGTGKT) coordinates ATP. The short motif at 165–168 (DEAD) is the DEAD box element. In terms of domain architecture, Helicase C-terminal spans 243–390 (KMRLLLTLLE…VTNYDSEALL (148 aa)). The tract at residues 395 to 435 (APVRVHRKHNSRPQGRSGSGGKPRSGNRNAPRRHDKTRRHS) is disordered. Residues 424 to 435 (APRRHDKTRRHS) are compositionally biased toward basic residues.

It belongs to the DEAD box helicase family. RhlB subfamily. As to quaternary structure, component of the RNA degradosome, which is a multiprotein complex involved in RNA processing and mRNA degradation.

It localises to the cytoplasm. The enzyme catalyses ATP + H2O = ADP + phosphate + H(+). In terms of biological role, DEAD-box RNA helicase involved in RNA degradation. Has RNA-dependent ATPase activity and unwinds double-stranded RNA. In Shewanella sediminis (strain HAW-EB3), this protein is ATP-dependent RNA helicase RhlB.